The chain runs to 416 residues: Adenylosuccinate synthetase (416 aa).

GTP is bound by residues 13 to 19 (GDEGKGK) and 41 to 43 (GHT). The active-site Proton acceptor is the Asp-14. Positions 14 and 41 each coordinate Mg(2+). IMP is bound by residues 14-17 (DEGK), 39-42 (NAGH), Thr-126, Arg-140, Gln-220, Thr-235, and Arg-299. Residue His-42 is the Proton donor of the active site. Residue 295–301 (VSTGRKR) coordinates substrate. Residues Arg-301, 327 to 329 (KLD), and 405 to 407 (STS) contribute to the GTP site.

The protein belongs to the adenylosuccinate synthetase family. As to quaternary structure, homodimer. Mg(2+) serves as cofactor.

It localises to the cytoplasm. It catalyses the reaction IMP + L-aspartate + GTP = N(6)-(1,2-dicarboxyethyl)-AMP + GDP + phosphate + 2 H(+). The protein operates within purine metabolism; AMP biosynthesis via de novo pathway; AMP from IMP: step 1/2. Plays an important role in the de novo pathway of purine nucleotide biosynthesis. Catalyzes the first committed step in the biosynthesis of AMP from IMP. The chain is Adenylosuccinate synthetase from Campylobacter lari (strain RM2100 / D67 / ATCC BAA-1060).